Reading from the N-terminus, the 1198-residue chain is Integrator complex subunit 2 (1198 aa).

The chain crosses the membrane as a helical span at residues 421 to 437 (FVSLSFCMLLAFSTLVS).

It belongs to the Integrator subunit 2 family. Component of the Integrator complex, composed of core subunits INTS1, INTS2, INTS3, INTS4, INTS5, INTS6, INTS7, INTS8, INTS9/RC74, INTS10, INTS11/CPSF3L, INTS12, INTS13, INTS14 and INTS15. The core complex associates with protein phosphatase 2A subunits PPP2CA and PPP2R1A, to form the Integrator-PP2A (INTAC) complex.

It localises to the nucleus. The protein resides in the nucleus membrane. The protein localises to the cytoplasm. Component of the integrator complex, a multiprotein complex that terminates RNA polymerase II (Pol II) transcription in the promoter-proximal region of genes. The integrator complex provides a quality checkpoint during transcription elongation by driving premature transcription termination of transcripts that are unfavorably configured for transcriptional elongation: the complex terminates transcription by (1) catalyzing dephosphorylation of the C-terminal domain (CTD) of Pol II subunit POLR2A/RPB1 and SUPT5H/SPT5, (2) degrading the exiting nascent RNA transcript via endonuclease activity and (3) promoting the release of Pol II from bound DNA. The integrator complex is also involved in terminating the synthesis of non-coding Pol II transcripts, such as enhancer RNAs (eRNAs), small nuclear RNAs (snRNAs), telomerase RNAs and long non-coding RNAs (lncRNAs). Mediates recruitment of cytoplasmic dynein to the nuclear envelope, probably as component of the integrator complex. The polypeptide is Integrator complex subunit 2 (Ints2) (Mus musculus (Mouse)).